Here is a 364-residue protein sequence, read N- to C-terminus: Mannose-1-phosphate guanyltransferase (364 aa).

The protein belongs to the transferase hexapeptide repeat family.

The protein resides in the cytoplasm. The catalysed reaction is alpha-D-mannose 1-phosphate + GTP + H(+) = GDP-alpha-D-mannose + diphosphate. The protein operates within nucleotide-sugar biosynthesis; GDP-alpha-D-mannose biosynthesis; GDP-alpha-D-mannose from alpha-D-mannose 1-phosphate (GTP route): step 1/1. Functionally, involved in cell wall synthesis where it is required for glycosylation. Involved in cell cycle progression through cell-size checkpoint. This Aspergillus oryzae (strain ATCC 42149 / RIB 40) (Yellow koji mold) protein is Mannose-1-phosphate guanyltransferase (mpg1).